We begin with the raw amino-acid sequence, 170 residues long: NADH-quinone oxidoreductase subunit J (170 aa).

The next 5 membrane-spanning stretches (helical) occupy residues 1-21 (MEFV…FVII), 30-50 (VYLI…GAFF), 56-76 (VIIY…MLNI), 94-114 (IGPS…IFFL), and 138-158 (VFLV…IFHI).

The protein belongs to the complex I subunit 6 family. In terms of assembly, composed of 13 different subunits. Subunits NuoA, H, J, K, L, M, N constitute the membrane sector of the complex.

Its subcellular location is the cell membrane. The enzyme catalyses a quinone + NADH + 5 H(+)(in) = a quinol + NAD(+) + 4 H(+)(out). Its function is as follows. NDH-1 shuttles electrons from NADH, via FMN and iron-sulfur (Fe-S) centers, to quinones in the respiratory chain. Couples the redox reaction to proton translocation (for every two electrons transferred, four hydrogen ions are translocated across the cytoplasmic membrane), and thus conserves the redox energy in a proton gradient. This is NADH-quinone oxidoreductase subunit J (nuoJ) from Buchnera aphidicola subsp. Acyrthosiphon pisum (strain APS) (Acyrthosiphon pisum symbiotic bacterium).